Here is a 326-residue protein sequence, read N- to C-terminus: Vascular endothelial growth factor D (326 aa).

The N-terminal stretch at 1–21 (MYGEWAAVNILMMSYVYLVQG) is a signal peptide. The propeptide occupies 22 to 93 (FSIEHRAVKD…SRSTSHRSTR (72 aa)). Cystine bridges form between Cys-116-Cys-158, Cys-147-Cys-194, and Cys-151-Cys-196. N-linked (GlcNAc...) asparagine glycans are attached at residues Asn-160 and Asn-190. The propeptide occupies 211-326 (SIQIPEEDQC…CRSMVFSLSP (116 aa)). The 1; approximate repeat unit spans residues 227 to 242 (CPVDMLWDNTKCKCVL). The segment at 227–317 (CPVDMLWDNT…KHKMFHPDTC (91 aa)) is 4 X 16 AA repeats of C-X(10)-C-X-C-X(1,3)-C. 2 consecutive repeat copies span residues 263-278 (CGPH…ECVC) and 282-298 (CPGD…CFEC). N-linked (GlcNAc...) asparagine glycosylation occurs at Asn-292. One copy of the 4; truncated repeat lies at 306-317 (CQKHKMFHPDTC).

It belongs to the PDGF/VEGF growth factor family. As to quaternary structure, homodimer; non-covalent and antiparallel. Post-translationally, undergoes a complex proteolytic maturation which generates a variety of processed secreted forms with increased activity toward VEGFR-3 and VEGFR-2. VEGF-D first form an antiparallel homodimer linked by disulfide bonds before secretion. The fully processed VEGF-D is composed mostly of two VEGF homology domains (VHDs) bound by non-covalent interactions. In terms of tissue distribution, highly expressed in the spleen, kidney, lung, tongue, ovary and mammary gland.

It is found in the secreted. Its function is as follows. Growth factor active in angiogenesis, lymphangiogenesis and endothelial cell growth, stimulating their proliferation and migration and also has effects on the permeability of blood vessels. May function in the formation of the venous and lymphatic vascular systems during embryogenesis, and also in the maintenance of differentiated lymphatic endothelium in adults. Binds and activates VEGFR-3 (Flt4) receptor. This is Vascular endothelial growth factor D from Rattus norvegicus (Rat).